Consider the following 714-residue polypeptide: Forkhead box protein P2 (714 aa).

The span at 1–28 shows a compositional bias: polar residues; that stretch reads MMQESATETISNSSMNQNGMSTLSSQLD. Disordered regions lie at residues 1-45 and 280-338; these read MMQE…SEVS and DNGI…TGAS. Over residues 291 to 304 the composition is skewed to low complexity; that stretch reads TTNNSSSTTSSTTS. The span at 314 to 323 shows a compositional bias: polar residues; that stretch reads SIVNGQSSVL. Over residues 325-336 the composition is skewed to basic and acidic residues; sequence ARRDSSSHEETG. The C2H2-type zinc finger occupies 345 to 370; sequence GVCKWPGCESICEDFGQFLKHLNNEH. The interval 387-408 is leucine-zipper; it reads VQQLEIQLSKERERLQAMMTHL. The segment at 421–425 is CTBP1-binding; sequence PLNLV. Residues 437–458 show a composition bias toward low complexity; it reads TSPQSLPQTPTTPTAPVTPITQ. Residues 437 to 464 form a disordered region; sequence TSPQSLPQTPTTPTAPVTPITQGPSVIT. The fork-head DNA-binding region spans 503-593; the sequence is RPPFTYATLI…SQKITGSPTL (91 aa). 2 disordered regions span residues 648 to 667 and 677 to 714; these read LDHIDSNGNSSPGCSPQPHI and VIAEDEDCPMSLVTTANHSPELEDDREIEEEPLSEDLE. The span at 698–714 shows a compositional bias: acidic residues; sequence LEDDREIEEEPLSEDLE.

As to quaternary structure, forms homodimers and heterodimers with FOXP1 and FOXP4. Dimerization is required for DNA-binding. Interacts with CTBP1. Interacts with FOXP1. Interacts with TBR1. Interacts with ZMYM2. In terms of tissue distribution, highest expression in lung. Lower expression in spleen, skeletal muscle, brain, kidney and small intestine.

The protein resides in the nucleus. Transcriptional repressor that may play a role in the specification and differentiation of lung epithelium. May also play a role in developing neural, gastrointestinal and cardiovascular tissues. Can act with CTBP1 to synergistically repress transcription but CTPBP1 is not essential. Plays a role in synapse formation by regulating SRPX2 levels. The sequence is that of Forkhead box protein P2 (Foxp2) from Mus musculus (Mouse).